Consider the following 337-residue polypeptide: PHD finger protein 11 (337 aa).

The C2HC pre-PHD-type zinc-finger motif lies at 25-61; that stretch reads KRTCALCPEGHEWSQIYFSPSGNIVAHENCLLYSSGL. Residues 91-143 form a PHD-type zinc finger; it reads LKCSFCNKGGATVGCDLWFCKKSYHYVCAKKDQAILQVDGNHGTYKLFCPEHS. Disordered stretches follow at residues 145 to 196 and 301 to 337; these read EQEE…HGHT and GDLD…GDSL. Basic and acidic residues predominate over residues 187 to 196; the sequence is HMTEEPHGHT. Polar residues-rich tracts occupy residues 301–312 and 323–337; these read GDLDCSSSTSGS and SQES…GDSL.

In terms of assembly, interacts with BRCA1 and RELA.

It is found in the nucleus. In terms of biological role, positive regulator of Th1-type cytokine gene expression. This is PHD finger protein 11 (Phf11) from Mus musculus (Mouse).